The following is a 206-amino-acid chain: Large ribosomal subunit protein uL22m (206 aa).

Residues 1–40 (MAAALLRELGALRVPNLRIWATQTLRVLPPSCIHTSASLD) constitute a mitochondrion transit peptide.

It belongs to the universal ribosomal protein uL22 family. In terms of assembly, component of the mitochondrial ribosome large subunit (39S) which comprises a 16S rRNA and about 50 distinct proteins.

The protein resides in the mitochondrion. In Mus musculus (Mouse), this protein is Large ribosomal subunit protein uL22m (Mrpl22).